The following is a 179-amino-acid chain: Casparian strip membrane protein 1 (179 aa).

At 1–17 (MKAGPLQLGVVPPANRA) the chain is on the cytoplasmic side. Residues 18 to 38 (IAILDFFLRPIAIVGTLASAI) form a helical membrane-spanning segment. The Extracellular segment spans residues 39 to 67 (AMATTNQTLPFFSQFIRFRAKFNDLPSFT). An N-linked (GlcNAc...) asparagine glycan is attached at Asn44. The helical transmembrane segment at 68–88 (FFVVASSIVSAYLILSLGFSI) threads the bilayer. The Cytoplasmic segment spans residues 89-100 (LHIAKSNLVNSR). Residues 101-121 (VLLLLLDTAAMGLLMAGSAAA) form a helical membrane-spanning segment. Topologically, residues 122–154 (TAIVQLAHKGNNKVNWFAICQQYNSFCKRVSGS) are extracellular. Residues 155–175 (LIGSYAGVVVLILLILLSGVA) traverse the membrane as a helical segment. The Cytoplasmic portion of the chain corresponds to 176–179 (LSRR).

It belongs to the Casparian strip membrane proteins (CASP) family. In terms of assembly, homodimer and heterodimers.

Its subcellular location is the cell membrane. Regulates membrane-cell wall junctions and localized cell wall deposition. Required for establishment of the Casparian strip membrane domain (CSD) and the subsequent formation of Casparian strips, a cell wall modification of the root endodermis that determines an apoplastic barrier between the intraorganismal apoplasm and the extraorganismal apoplasm and prevents lateral diffusion. This chain is Casparian strip membrane protein 1, found in Lactuca sativa (Garden lettuce).